The chain runs to 472 residues: Cysteine--tRNA ligase (472 aa).

Cysteine 29 contributes to the Zn(2+) binding site. The 'HIGH' region signature appears at 31 to 41 (PTVYDFAHIGN). Zn(2+)-binding residues include cysteine 227, histidine 252, and glutamate 256. The 'KMSKS' region motif lies at 285–289 (KMSKS). ATP is bound at residue lysine 288.

Belongs to the class-I aminoacyl-tRNA synthetase family. As to quaternary structure, monomer. Zn(2+) is required as a cofactor.

Its subcellular location is the cytoplasm. The enzyme catalyses tRNA(Cys) + L-cysteine + ATP = L-cysteinyl-tRNA(Cys) + AMP + diphosphate. This is Cysteine--tRNA ligase from Bradyrhizobium sp. (strain BTAi1 / ATCC BAA-1182).